We begin with the raw amino-acid sequence, 404 residues long: 1-deoxy-D-xylulose 5-phosphate reductoisomerase (404 aa).

8 residues coordinate NADPH: T10, G11, S12, I13, G36, R37, N38, and N124. A 1-deoxy-D-xylulose 5-phosphate-binding site is contributed by K125. E126 lines the NADPH pocket. D150 provides a ligand contact to Mn(2+). Residues S151, E152, S186, and H209 each coordinate 1-deoxy-D-xylulose 5-phosphate. Mn(2+) is bound at residue E152. G215 is a binding site for NADPH. The 1-deoxy-D-xylulose 5-phosphate site is built by S222, N227, K228, and E231. Residue E231 coordinates Mn(2+).

Belongs to the DXR family. As to quaternary structure, homodimer. The cofactor is Mg(2+). Requires Mn(2+) as cofactor.

The catalysed reaction is 2-C-methyl-D-erythritol 4-phosphate + NADP(+) = 1-deoxy-D-xylulose 5-phosphate + NADPH + H(+). It participates in isoprenoid biosynthesis; isopentenyl diphosphate biosynthesis via DXP pathway; isopentenyl diphosphate from 1-deoxy-D-xylulose 5-phosphate: step 1/6. Its function is as follows. Catalyzes the NADPH-dependent rearrangement and reduction of 1-deoxy-D-xylulose-5-phosphate (DXP) to 2-C-methyl-D-erythritol 4-phosphate (MEP). The sequence is that of 1-deoxy-D-xylulose 5-phosphate reductoisomerase from Erwinia tasmaniensis (strain DSM 17950 / CFBP 7177 / CIP 109463 / NCPPB 4357 / Et1/99).